We begin with the raw amino-acid sequence, 268 residues long: Interleukin-2 receptor subunit alpha (268 aa).

A signal peptide spans 1–21 (MEPCLLMWGILTFITVSGYTT). Residues 22 to 81 (DLCDDDPPNLKHATFKALTYKTGTVLNCDCERGFRRISSYMHCTGNSSHASWENKCRCKS) form the Sushi 1 domain. Over 22–237 (DLCDDDPPNL…ESFIFTTEYQ (216 aa)) the chain is Extracellular. Cystine bridges form between Cys-24–Cys-64, Cys-49–Cys-77, and Cys-51–Cys-79. Asn-67 carries N-linked (GlcNAc...) asparagine glycosylation. The interval 83 to 112 (SPENRKGKVTTKPEEQKGENPTEMQSQTPP) is disordered. Positions 85-102 (ENRKGKVTTKPEEQKGEN) are enriched in basic and acidic residues. Positions 120-183 (GHCREPPPWE…WTQPPLKCIS (64 aa)) constitute a Sushi 2 domain. Cystine bridges form between Cys-122/Cys-165 and Cys-149/Cys-181. The interval 186–213 (QFPDDEELQASTDAPAGRDTSSPFITTS) is disordered. Residues 204–213 (DTSSPFITTS) are compositionally biased toward polar residues. Residues 238-258 (IAVASCVLLLISIVLLSGLTW) form a helical membrane-spanning segment. Over 259–268 (QRRRRKSRTI) the chain is Cytoplasmic.

Non-covalent dimer of an alpha and a beta subunit. IL2R exists in 3 different forms: a high affinity dimer, an intermediate affinity monomer (beta subunit), and a low affinity monomer (alpha subunit). The high and intermediate affinity forms also associate with a gamma subunit.

It is found in the membrane. Its function is as follows. Receptor for interleukin-2. The receptor is involved in the regulation of immune tolerance by controlling regulatory T cells (TREGs) activity. TREGs suppress the activation and expansion of autoreactive T-cells. This is Interleukin-2 receptor subunit alpha (IL2RA) from Canis lupus familiaris (Dog).